Reading from the N-terminus, the 426-residue chain is Serine hydroxymethyltransferase (426 aa).

(6S)-5,6,7,8-tetrahydrofolate is bound by residues Leu121 and 125–127 (GHL). The residue at position 230 (Lys230) is an N6-(pyridoxal phosphate)lysine. 354 to 356 (SPF) contacts (6S)-5,6,7,8-tetrahydrofolate.

The protein belongs to the SHMT family. In terms of assembly, homodimer. Pyridoxal 5'-phosphate serves as cofactor.

It localises to the cytoplasm. It carries out the reaction (6R)-5,10-methylene-5,6,7,8-tetrahydrofolate + glycine + H2O = (6S)-5,6,7,8-tetrahydrofolate + L-serine. It participates in one-carbon metabolism; tetrahydrofolate interconversion. Its pathway is amino-acid biosynthesis; glycine biosynthesis; glycine from L-serine: step 1/1. Functionally, catalyzes the reversible interconversion of serine and glycine with tetrahydrofolate (THF) serving as the one-carbon carrier. This reaction serves as the major source of one-carbon groups required for the biosynthesis of purines, thymidylate, methionine, and other important biomolecules. Also exhibits THF-independent aldolase activity toward beta-hydroxyamino acids, producing glycine and aldehydes, via a retro-aldol mechanism. The protein is Serine hydroxymethyltransferase of Gloeobacter violaceus (strain ATCC 29082 / PCC 7421).